Reading from the N-terminus, the 217-residue chain is Uracil-DNA glycosylase (217 aa).

D62 (proton acceptor) is an active-site residue.

The protein belongs to the uracil-DNA glycosylase (UDG) superfamily. UNG family.

It localises to the cytoplasm. It carries out the reaction Hydrolyzes single-stranded DNA or mismatched double-stranded DNA and polynucleotides, releasing free uracil.. In terms of biological role, excises uracil residues from the DNA which can arise as a result of misincorporation of dUMP residues by DNA polymerase or due to deamination of cytosine. The protein is Uracil-DNA glycosylase of Streptococcus pneumoniae (strain Hungary19A-6).